Reading from the N-terminus, the 720-residue chain is Protein O-mannosyl-transferase 1 (720 aa).

A run of 8 helical transmembrane segments spans residues 7–27, 67–87, 105–125, 127–147, 150–170, 178–198, 201–221, and 239–259; these read PVSV…LALF, FGHM…NFVW, LIPA…VVEL, YSHF…SLIV, RFML…LSYL, SFFK…GIGV, MGMF…WQLI, and FLAL…IHLT. MIR domains lie at 291-354, 365-422, and 426-486; these read PLDV…IKDP, PKPV…VDIV, and SEKE…VEEH. Helical transmembrane passes span 570-590, 609-629, 633-653, and 670-690; these read IVTW…FLTY, LVLA…PFFL, TLFL…IPIV, and AFGG…HSLS.

The protein belongs to the glycosyltransferase 39 family. As to expression, widely expressed. Has particularly strong expression in testis, ovary, brain, liver and heart.

The protein localises to the endoplasmic reticulum membrane. It catalyses the reaction a di-trans,poly-cis-dolichyl beta-D-mannosyl phosphate + L-seryl-[protein] = 3-O-(alpha-D-mannosyl)-L-seryl-[protein] + a di-trans,poly-cis-dolichyl phosphate + H(+). It carries out the reaction a di-trans,poly-cis-dolichyl beta-D-mannosyl phosphate + L-threonyl-[protein] = 3-O-(alpha-D-mannosyl)-L-threonyl-[protein] + a di-trans,poly-cis-dolichyl phosphate + H(+). Its pathway is protein modification; protein glycosylation. Transfers mannosyl residues to the hydroxyl group of serine or threonine residues. Coexpression of both POMT1 and POMT2 is necessary for enzyme activity, expression of either POMT1 or POMT2 alone is insufficient. This Danio rerio (Zebrafish) protein is Protein O-mannosyl-transferase 1.